The following is a 511-amino-acid chain: Cytochrome P450 monooxygenase nodR (511 aa).

A helical membrane pass occupies residues 8 to 28 (ILFPISWEQSPIFLAVGLIFA). 2 N-linked (GlcNAc...) asparagine glycosylation sites follow: asparagine 76 and asparagine 373. A heme-binding site is contributed by cysteine 452.

Belongs to the cytochrome P450 family. It depends on heme as a cofactor.

It is found in the membrane. It functions in the pathway secondary metabolite biosynthesis. Cytochrome P450 monooxygenase; part of the gene cluster that mediates the biosynthesis of the indole diterpenes nodulisporic acids (NA). Nodulisporic acid A (NAA) and its chemically modified derivatives are of particular significance because of their highly potent insecticidal activity against blood-feeding arthropods and lack of observable adverse effects on mammals, in particular the tremogenicity associated with the paspaline-derived IDTs is not observed. The geranylgeranyl diphosphate (GGPP) synthase ggs1, localized outside of the cluster, is proposed to catalyze the first step in nodulisporic acid biosynthesis via conversion of farnesyl pyrophosphate and isopentyl pyrophosphate into geranylgeranyl pyrophosphate (GGPP). Condensation of indole-3-glycerol phosphate with GGPP by the prenyl transferase nodC then forms 3-geranylgeranylindole (3-GGI). Epoxidation by the FAD-dependent monooxygenase nodM leads to a single-epoxidized-GGI that is substrate of the terpene cyclase nodB for cyclization to yield emindole SB. The terminal methyl carbon, C28, of emindole SB is then oxidized by the cytochrome P450 monooxygenase nodW to produce nodulisporic acid F (NAF), the pentacyclic core of NAA. NAF is converted to nodulisporic acid E (NAE) via prenylation. This step is probably performed by one of the indole diterpene prenyltransferases nodD1 or nodD2. Several oxidation steps performed by the FAD-linked oxidoreductase nodO and one of the cytochrome P450 monooxygenase nodR, nodX or nodZ further convert NAE to nodulisporic acid D (NAD). NAD is substrate of cytochrome P450 monooxygenase nodJ to produce the precursor of nodulisporic acid C (NAC), converted to NAC by one of the indole diterpene prenyltransferases nodD1 or nodD2. The FAD-dependent monooxygenase nodY2 then oxidizes NAC to nodulisporic acid B (NAB). Finally NAB is converted to NAA by one of the cytochrome P450 monooxygenases nodR, nodX or nodZ. This Hypoxylon pulicicidum protein is Cytochrome P450 monooxygenase nodR.